The sequence spans 302 residues: Aspartate carbamoyltransferase catalytic subunit (302 aa).

The carbamoyl phosphate site is built by arginine 53 and threonine 54. Residue lysine 82 participates in L-aspartate binding. Carbamoyl phosphate is bound by residues arginine 103, histidine 131, and glutamine 134. Residues arginine 164 and arginine 223 each contribute to the L-aspartate site. Carbamoyl phosphate contacts are provided by leucine 260 and proline 261.

This sequence belongs to the aspartate/ornithine carbamoyltransferase superfamily. ATCase family. As to quaternary structure, heterooligomer of catalytic and regulatory chains.

The catalysed reaction is carbamoyl phosphate + L-aspartate = N-carbamoyl-L-aspartate + phosphate + H(+). It functions in the pathway pyrimidine metabolism; UMP biosynthesis via de novo pathway; (S)-dihydroorotate from bicarbonate: step 2/3. Its function is as follows. Catalyzes the condensation of carbamoyl phosphate and aspartate to form carbamoyl aspartate and inorganic phosphate, the committed step in the de novo pyrimidine nucleotide biosynthesis pathway. The protein is Aspartate carbamoyltransferase catalytic subunit of Methanococcus maripaludis (strain C5 / ATCC BAA-1333).